We begin with the raw amino-acid sequence, 33 residues long: Ferredoxin (33 aa).

One can recognise a 2Fe-2S ferredoxin-type domain in the interval 3-33 (KYKVRLLSEAEGIDVTIDSADDVYILDAAEE).

Belongs to the 2Fe2S plant-type ferredoxin family. [2Fe-2S] cluster is required as a cofactor.

It is found in the plastid. The protein resides in the chloroplast. Ferredoxins are iron-sulfur proteins that transfer electrons in a wide variety of metabolic reactions. The sequence is that of Ferredoxin from Porphyridium aerugineum (Red microalga).